The following is a 537-amino-acid chain: CTP synthase (537 aa).

Residues 1 to 268 (MPFKCIFLTG…ANFIGEKLKL (268 aa)) form an amidoligase domain region. Ser14 provides a ligand contact to CTP. Ser14 contacts UTP. ATP is bound by residues 15–20 (SLGKGL) and Asp72. 2 residues coordinate Mg(2+): Asp72 and Glu142. CTP contacts are provided by residues 149-151 (DIE), 188-193 (KSKPTQ), and Lys224. Residues 188–193 (KSKPTQ) and Lys224 contribute to the UTP site. One can recognise a Glutamine amidotransferase type-1 domain in the interval 293–533 (KIGVVGKYVQ…IEAALVYSKD (241 aa)). Gly352 is a binding site for L-glutamine. Cys379 functions as the Nucleophile; for glutamine hydrolysis in the catalytic mechanism. L-glutamine-binding positions include 380–383 (LGMQ), Glu403, and Arg461. Active-site residues include His506 and Glu508.

It belongs to the CTP synthase family. Homotetramer.

It carries out the reaction UTP + L-glutamine + ATP + H2O = CTP + L-glutamate + ADP + phosphate + 2 H(+). It catalyses the reaction L-glutamine + H2O = L-glutamate + NH4(+). The enzyme catalyses UTP + NH4(+) + ATP = CTP + ADP + phosphate + 2 H(+). It functions in the pathway pyrimidine metabolism; CTP biosynthesis via de novo pathway; CTP from UDP: step 2/2. With respect to regulation, allosterically activated by GTP, when glutamine is the substrate; GTP has no effect on the reaction when ammonia is the substrate. The allosteric effector GTP functions by stabilizing the protein conformation that binds the tetrahedral intermediate(s) formed during glutamine hydrolysis. Inhibited by the product CTP, via allosteric rather than competitive inhibition. Functionally, catalyzes the ATP-dependent amination of UTP to CTP with either L-glutamine or ammonia as the source of nitrogen. Regulates intracellular CTP levels through interactions with the four ribonucleotide triphosphates. This Chlamydia pneumoniae (Chlamydophila pneumoniae) protein is CTP synthase.